Reading from the N-terminus, the 757-residue chain is Glutathione biosynthesis bifunctional protein GshAB (757 aa).

The interval 1 to 337 is glutamate--cysteine ligase; it reads MNIQQIVKEK…LGRARLGEVA (337 aa). In terms of domain architecture, ATP-grasp spans 494–757; the sequence is KKVLAKAGFN…VLGMLFPELV (264 aa). 521-580 lines the ATP pocket; it reads PLFEGKAVVIKPKSTNFGLGISIFQQGVHDKADFAKAVEIAFREDKEVMVEDYLVGTEYR. Residues Asp702, Glu723, and Asn725 each coordinate Mg(2+). Asp702, Glu723, and Asn725 together coordinate Mn(2+).

It in the N-terminal section; belongs to the glutamate--cysteine ligase type 1 family. Type 2 subfamily. In terms of assembly, monomer. It depends on Mg(2+) as a cofactor. Requires Mn(2+) as cofactor.

It catalyses the reaction L-cysteine + L-glutamate + ATP = gamma-L-glutamyl-L-cysteine + ADP + phosphate + H(+). The catalysed reaction is gamma-L-glutamyl-L-cysteine + glycine + ATP = glutathione + ADP + phosphate + H(+). It participates in sulfur metabolism; glutathione biosynthesis; glutathione from L-cysteine and L-glutamate: step 1/2. It functions in the pathway sulfur metabolism; glutathione biosynthesis; glutathione from L-cysteine and L-glutamate: step 2/2. In terms of biological role, synthesizes glutathione from L-glutamate and L-cysteine via gamma-L-glutamyl-L-cysteine. In Mannheimia succiniciproducens (strain KCTC 0769BP / MBEL55E), this protein is Glutathione biosynthesis bifunctional protein GshAB.